The chain runs to 142 residues: Large ribosomal subunit protein uL13 (142 aa).

This sequence belongs to the universal ribosomal protein uL13 family. In terms of assembly, part of the 50S ribosomal subunit.

In terms of biological role, this protein is one of the early assembly proteins of the 50S ribosomal subunit, although it is not seen to bind rRNA by itself. It is important during the early stages of 50S assembly. The sequence is that of Large ribosomal subunit protein uL13 from Bordetella bronchiseptica (strain ATCC BAA-588 / NCTC 13252 / RB50) (Alcaligenes bronchisepticus).